The following is a 690-amino-acid chain: Protein-glucosylgalactosylhydroxylysine glucosidase (690 aa).

Residue 299-300 participates in substrate binding; sequence WD. The Proton donor role is filled by E429. Substrate is bound at residue 497 to 498; sequence KQ.

Belongs to the glycosyl hydrolase 65 family.

It carries out the reaction (5R)-5-O-[alpha-D-glucosyl-(1-&gt;2)-beta-D-galactosyl]-5-hydroxy-L-lysyl-[collagen] + H2O = (5R)-5-O-(beta-D-galactosyl)-5-hydroxy-L-lysyl-[collagen] + D-glucose. Catalyzes the hydrolysis of glucose from the disaccharide unit linked to hydroxylysine residues of collagen and collagen-like proteins. The polypeptide is Protein-glucosylgalactosylhydroxylysine glucosidase (Mus musculus (Mouse)).